The sequence spans 376 residues: Phosphate acyltransferase (376 aa).

Residues 334-376 (AGSLEQAKRDAGGPGSASQMASPIAGPVSGQPAEPYSAQSSKA) form a disordered region.

It belongs to the PlsX family. As to quaternary structure, homodimer. Probably interacts with PlsY.

Its subcellular location is the cytoplasm. The catalysed reaction is a fatty acyl-[ACP] + phosphate = an acyl phosphate + holo-[ACP]. It functions in the pathway lipid metabolism; phospholipid metabolism. Catalyzes the reversible formation of acyl-phosphate (acyl-PO(4)) from acyl-[acyl-carrier-protein] (acyl-ACP). This enzyme utilizes acyl-ACP as fatty acyl donor, but not acyl-CoA. The protein is Phosphate acyltransferase of Paraburkholderia phymatum (strain DSM 17167 / CIP 108236 / LMG 21445 / STM815) (Burkholderia phymatum).